Reading from the N-terminus, the 882-residue chain is Protein translocase subunit SecA (882 aa).

Residues Gln79, 97-101, and Asp487 contribute to the ATP site; that span reads GEGKT.

Belongs to the SecA family.

Its subcellular location is the plastid. It localises to the chloroplast stroma. It is found in the chloroplast thylakoid membrane. The enzyme catalyses ATP + H2O + cellular proteinSide 1 = ADP + phosphate + cellular proteinSide 2.. In terms of biological role, has a central role in coupling the hydrolysis of ATP to the transfer of proteins across the thylakoid membrane. The protein is Protein translocase subunit SecA of Gracilaria tenuistipitata var. liui (Red alga).